The following is a 948-amino-acid chain: Isoleucine--tRNA ligase (948 aa).

A 'HIGH' region motif is present at residues 58–68 (PYANGSIHIGH). An L-isoleucyl-5'-AMP-binding site is contributed by Glu572. The 'KMSKS' region motif lies at 613-617 (KMSKS). Residue Lys616 participates in ATP binding. Residues Cys911, Cys914, Cys931, and Cys934 each contribute to the Zn(2+) site.

Belongs to the class-I aminoacyl-tRNA synthetase family. IleS type 1 subfamily. As to quaternary structure, monomer. The cofactor is Zn(2+).

Its subcellular location is the cytoplasm. It catalyses the reaction tRNA(Ile) + L-isoleucine + ATP = L-isoleucyl-tRNA(Ile) + AMP + diphosphate. In terms of biological role, catalyzes the attachment of isoleucine to tRNA(Ile). As IleRS can inadvertently accommodate and process structurally similar amino acids such as valine, to avoid such errors it has two additional distinct tRNA(Ile)-dependent editing activities. One activity is designated as 'pretransfer' editing and involves the hydrolysis of activated Val-AMP. The other activity is designated 'posttransfer' editing and involves deacylation of mischarged Val-tRNA(Ile). This is Isoleucine--tRNA ligase from Edwardsiella ictaluri (strain 93-146).